Here is a 467-residue protein sequence, read N- to C-terminus: Argininosuccinate lyase (467 aa).

The protein belongs to the lyase 1 family. Argininosuccinate lyase subfamily.

It is found in the cytoplasm. The enzyme catalyses 2-(N(omega)-L-arginino)succinate = fumarate + L-arginine. The protein operates within amino-acid biosynthesis; L-arginine biosynthesis; L-arginine from L-ornithine and carbamoyl phosphate: step 3/3. The polypeptide is Argininosuccinate lyase (Nitrosococcus oceani (strain ATCC 19707 / BCRC 17464 / JCM 30415 / NCIMB 11848 / C-107)).